We begin with the raw amino-acid sequence, 246 residues long: Homeobox protein Hox-B4a (246 aa).

The tract at residues Tyr23 to Arg125 is disordered. Composition is skewed to polar residues over residues Ala39–His48 and Gln112–Ser123. Positions Val130 to Lys135 match the Antp-type hexapeptide motif. A DNA-binding region (homeobox) is located at residues Pro151–His210. Residues His210–Leu246 are disordered. The span at Lys216–Ala239 shows a compositional bias: polar residues.

The protein belongs to the Antp homeobox family. Deformed subfamily.

It is found in the nucleus. Functionally, sequence-specific transcription factor which is part of a developmental regulatory system that provides cells with specific positional identities on the anterior-posterior axis. This chain is Homeobox protein Hox-B4a (hoxb4a), found in Danio rerio (Zebrafish).